The sequence spans 269 residues: Tryptophan synthase alpha chain (269 aa).

Catalysis depends on proton acceptor residues Glu50 and Asp61.

The protein belongs to the TrpA family. In terms of assembly, tetramer of two alpha and two beta chains.

It carries out the reaction (1S,2R)-1-C-(indol-3-yl)glycerol 3-phosphate + L-serine = D-glyceraldehyde 3-phosphate + L-tryptophan + H2O. The protein operates within amino-acid biosynthesis; L-tryptophan biosynthesis; L-tryptophan from chorismate: step 5/5. In terms of biological role, the alpha subunit is responsible for the aldol cleavage of indoleglycerol phosphate to indole and glyceraldehyde 3-phosphate. The polypeptide is Tryptophan synthase alpha chain (Buchnera aphidicola subsp. Baizongia pistaciae (strain Bp)).